The chain runs to 723 residues: Aspartate--tRNA(Asp/Asn) ligase 1 (723 aa).

An L-aspartate-binding site is contributed by E206. An aspartate region spans residues 230 to 233 (QLFK). R252 provides a ligand contact to L-aspartate. ATP contacts are provided by residues 252–254 (RDE) and Q261. L-aspartate is bound at residue H481. Position 516 (E516) interacts with ATP. R523 is a binding site for L-aspartate. 568 to 571 (GMDR) lines the ATP pocket.

Belongs to the class-II aminoacyl-tRNA synthetase family. Type 1 subfamily. In terms of assembly, homodimer.

The protein resides in the cytoplasm. It catalyses the reaction tRNA(Asx) + L-aspartate + ATP = L-aspartyl-tRNA(Asx) + AMP + diphosphate. Its function is as follows. Aspartyl-tRNA synthetase with relaxed tRNA specificity since it is able to aspartylate not only its cognate tRNA(Asp) but also tRNA(Asn). Reaction proceeds in two steps: L-aspartate is first activated by ATP to form Asp-AMP and then transferred to the acceptor end of tRNA(Asp/Asn). In Syntrophus aciditrophicus (strain SB), this protein is Aspartate--tRNA(Asp/Asn) ligase 1.